The sequence spans 37 residues: Cytochrome b6-f complex subunit 5 (37 aa).

A helical membrane pass occupies residues 5-25; sequence FLFGIVLGLIPITLAGLFVTA.

Belongs to the PetG family. In terms of assembly, the 4 large subunits of the cytochrome b6-f complex are cytochrome b6, subunit IV (17 kDa polypeptide, PetD), cytochrome f and the Rieske protein, while the 4 small subunits are PetG, PetL, PetM and PetN. The complex functions as a dimer.

It localises to the plastid. It is found in the chloroplast thylakoid membrane. Its function is as follows. Component of the cytochrome b6-f complex, which mediates electron transfer between photosystem II (PSII) and photosystem I (PSI), cyclic electron flow around PSI, and state transitions. PetG is required for either the stability or assembly of the cytochrome b6-f complex. The protein is Cytochrome b6-f complex subunit 5 of Solanum lycopersicum (Tomato).